A 157-amino-acid polypeptide reads, in one-letter code: DNA gyrase inhibitor 2 (157 aa).

It belongs to the DNA gyrase inhibitor family. Interacts with DNA gyrase.

The protein localises to the cytoplasm. Inhibits the supercoiling activity of DNA gyrase. Acts by inhibiting DNA gyrase at an early step, prior to (or at the step of) binding of DNA by the gyrase. It protects cells against toxins that target DNA gyrase, by inhibiting activity of these toxins and reducing the formation of lethal double-strand breaks in the cell. The polypeptide is DNA gyrase inhibitor 2 (Dickeya dadantii (strain 3937) (Erwinia chrysanthemi (strain 3937))).